A 278-amino-acid polypeptide reads, in one-letter code: 3-methyl-2-oxobutanoate hydroxymethyltransferase (278 aa).

2 residues coordinate Mg(2+): D49 and D88. 3-methyl-2-oxobutanoate contacts are provided by residues 49–50 (DS), D88, and K118. Residue E120 coordinates Mg(2+). The active-site Proton acceptor is the E186.

It belongs to the PanB family. In terms of assembly, homodecamer; pentamer of dimers. It depends on Mg(2+) as a cofactor.

It localises to the cytoplasm. It catalyses the reaction 3-methyl-2-oxobutanoate + (6R)-5,10-methylene-5,6,7,8-tetrahydrofolate + H2O = 2-dehydropantoate + (6S)-5,6,7,8-tetrahydrofolate. Its pathway is cofactor biosynthesis; (R)-pantothenate biosynthesis; (R)-pantoate from 3-methyl-2-oxobutanoate: step 1/2. Catalyzes the reversible reaction in which hydroxymethyl group from 5,10-methylenetetrahydrofolate is transferred onto alpha-ketoisovalerate to form ketopantoate. The protein is 3-methyl-2-oxobutanoate hydroxymethyltransferase of Bordetella parapertussis (strain 12822 / ATCC BAA-587 / NCTC 13253).